The following is a 436-amino-acid chain: Tol-Pal system protein TolB (436 aa).

Residues 1 to 28 (MEMLRRNFFRLLMVLVAGCGLIASPANA) form the signal peptide.

Belongs to the TolB family. In terms of assembly, the Tol-Pal system is composed of five core proteins: the inner membrane proteins TolA, TolQ and TolR, the periplasmic protein TolB and the outer membrane protein Pal. They form a network linking the inner and outer membranes and the peptidoglycan layer.

It is found in the periplasm. Part of the Tol-Pal system, which plays a role in outer membrane invagination during cell division and is important for maintaining outer membrane integrity. This Rhizobium meliloti (strain 1021) (Ensifer meliloti) protein is Tol-Pal system protein TolB.